The chain runs to 201 residues: Recombination protein RecR (201 aa).

The C4-type zinc-finger motif lies at 57 to 72 (CTHCRTFTEEESCAIC). One can recognise a Toprim domain in the interval 81–176 (GFLCVVEQPS…KVSRIAHGIP (96 aa)).

Belongs to the RecR family.

May play a role in DNA repair. It seems to be involved in an RecBC-independent recombinational process of DNA repair. It may act with RecF and RecO. This Histophilus somni (strain 2336) (Haemophilus somnus) protein is Recombination protein RecR.